Reading from the N-terminus, the 271-residue chain is Arginine and glutamate-rich protein 1 (271 aa).

2 stretches are compositionally biased toward basic residues: residues 1 to 29 (MGRSRSRSSSRSKHTKSSKHNKKRSRSRS) and 37 to 58 (VRKRSKSRESKRNRRRESRSRS). Residues 1-72 (MGRSRSRSSS…AAASRRERER (72 aa)) are necessary and sufficient for RNA binding. Residues 1 to 112 (MGRSRSRSSS…EKKAEFERQR (112 aa)) form a disordered region. Phosphoserine is present on residues S58 and S60. T61 carries the phosphothreonine modification. Composition is skewed to basic and acidic residues over residues 66 to 82 (SRRERERASSPPDRIDI) and 91 to 112 (SSLDEKQKREEEEKKAEFERQR). The necessary and sufficient for transcriptional regulation stretch occupies residues 73 to 271 (ASSPPDRIDI…KLSFSLKTQD (199 aa)). 2 positions are modified to phosphoserine: S74 and S75. The LXXLL motif 1; degenerate motif lies at 170–174 (LLEEL). Positions 199-203 (LERIL) match the LXXLL motif 2; degenerate motif. The span at 236-251 (MKLEQERQRQQKEEQK) shows a compositional bias: basic and acidic residues. The interval 236-271 (MKLEQERQRQQKEEQKIILGKGKSRPKLSFSLKTQD) is disordered. S264 carries the phosphoserine modification.

It belongs to the ARGLU1 family. In terms of assembly, interacts with MED1; the interaction is direct. Interacts with PUF60, U2AF2 and JMJD6; may interact with other proteins involved in RNA processing and splicing. In terms of tissue distribution, high expression levels in the neocortex, hippocampus and thalamus but low expression levels in the midbrain and hindbrain (at protein level). Ubiquitously expressed with highest expression levels in the central nervous system and low expression in uterus and pancreas.

The protein resides in the nucleus. It is found in the nucleus speckle. The protein localises to the chromosome. Functionally, dual function regulator of gene expression; regulator of transcription and modulator of alternative splicing. General coactivator of nuclear receptor-induced gene expression, including genes activated by the glucocorticoid receptor NR3C1. Binds to a subset of pre-mRNAs and to components of the spliceosome machinery to directly modulate basal alternative splicing; involved in simple and complex cassette exon splicing events. Binds its own pre-mRNA and regulates its alternative splicing and degradation; one of the alternatively spliced products is a stable intronic sequence RNA (sisRNA) that binds the protein to regulate its ability to affect splicing. Binding of the sisRNA stimulates phase separation and localization to nuclear speckles, which may contribute to activation of nuclear receptor-induced gene expression. May also indirectly modulate alternative splicing. Regulates transcription of genes involved in heart development, neuronal cell function, protein localization and chromatin localization. Regulates splicing of genes involved in neurogenesis and chromatin organization. Essential for central nervous system development. Required for the estrogen-dependent expression of ESR1 target genes. Can act in cooperation with MED1. In Mus musculus (Mouse), this protein is Arginine and glutamate-rich protein 1 (Arglu1).